Here is a 345-residue protein sequence, read N- to C-terminus: Opioid-binding protein/cell adhesion molecule (345 aa).

The signal sequence occupies residues 1–27 (MGVCGYLFLPWKCLVVVSLRLLFLVPT). 3 Ig-like C2-type domains span residues 39–126 (PKAM…PKTS), 136–219 (PQIM…VKIT), and 223–310 (PPYI…ASIT). 3 N-linked (GlcNAc...) asparagine glycosylation sites follow: Asn-44, Asn-70, and Asn-140. A disulfide bridge links Cys-57 with Cys-115. Intrachain disulfides connect Cys-157–Cys-202 and Cys-244–Cys-296. N-linked (GlcNAc...) asparagine glycans are attached at residues Asn-285, Asn-293, and Asn-306. Asn-322 carries GPI-anchor amidated asparagine lipidation. A propeptide spans 323-345 (SASRALACLWLSGTFFAHFFIKF) (removed in mature form).

This sequence belongs to the immunoglobulin superfamily. IgLON family.

It localises to the cell membrane. Its function is as follows. Binds opioids in the presence of acidic lipids; probably involved in cell contact. This is Opioid-binding protein/cell adhesion molecule (Opcml) from Rattus norvegicus (Rat).